The following is a 311-amino-acid chain: Cytosolic Fe-S cluster assembly factor Nubp1 homolog (311 aa).

The interval 1–21 (MQAPPPEHCPGVESEEAGKGS) is disordered. Residues Cys9, Cys23, Cys26, and Cys32 each coordinate [4Fe-4S] cluster. 63 to 70 (GKGGVGKS) is an ATP binding site. The [4Fe-4S] cluster site is built by Cys240 and Cys243.

This sequence belongs to the Mrp/NBP35 ATP-binding proteins family. NUBP1/NBP35 subfamily. Heterotetramer of 2 Nubp1 and 2 Nubp2 chains. [4Fe-4S] cluster is required as a cofactor.

It is found in the cytoplasm. Its function is as follows. Component of the cytosolic iron-sulfur (Fe/S) protein assembly (CIA) machinery. Required for maturation of extramitochondrial Fe-S proteins. The Nubp1-Nubp2 heterotetramer forms a Fe-S scaffold complex, mediating the de novo assembly of an Fe-S cluster and its transfer to target apoproteins. The protein is Cytosolic Fe-S cluster assembly factor Nubp1 homolog of Drosophila melanogaster (Fruit fly).